A 122-amino-acid polypeptide reads, in one-letter code: Large-conductance mechanosensitive channel (122 aa).

The next 2 membrane-spanning stretches (helical) occupy residues Val14–Leu34 and Gly67–Ile87.

Belongs to the MscL family. Homopentamer.

The protein resides in the cell membrane. Its function is as follows. Channel that opens in response to stretch forces in the membrane lipid bilayer. May participate in the regulation of osmotic pressure changes within the cell. This chain is Large-conductance mechanosensitive channel, found in Lactococcus lactis subsp. lactis (strain IL1403) (Streptococcus lactis).